Reading from the N-terminus, the 281-residue chain is Small ribosomal subunit biogenesis GTPase RsgA (281 aa).

Positions 59–212 constitute a CP-type G domain; the sequence is QNEFIRPKVA…LIDTPGFSSL (154 aa). GTP-binding positions include 108 to 111 and 155 to 163; these read TKAD and GQSGVGKTT. Cysteine 235, cysteine 240, histidine 242, and cysteine 250 together coordinate Zn(2+).

The protein belongs to the TRAFAC class YlqF/YawG GTPase family. RsgA subfamily. As to quaternary structure, monomer. Associates with 30S ribosomal subunit, binds 16S rRNA. Zn(2+) serves as cofactor.

The protein resides in the cytoplasm. In terms of biological role, one of several proteins that assist in the late maturation steps of the functional core of the 30S ribosomal subunit. Helps release RbfA from mature subunits. May play a role in the assembly of ribosomal proteins into the subunit. Circularly permuted GTPase that catalyzes slow GTP hydrolysis, GTPase activity is stimulated by the 30S ribosomal subunit. The polypeptide is Small ribosomal subunit biogenesis GTPase RsgA (Mycoplasmopsis agalactiae (strain NCTC 10123 / CIP 59.7 / PG2) (Mycoplasma agalactiae)).